We begin with the raw amino-acid sequence, 400 residues long: Acetate kinase (400 aa).

Asn7 serves as a coordination point for Mg(2+). Lys14 is a binding site for ATP. Residue Arg85 coordinates substrate. Asp142 functions as the Proton donor/acceptor in the catalytic mechanism. ATP is bound by residues 202–206 (HLGNG), 278–280 (DMR), and 326–330 (GIGEN). A Mg(2+)-binding site is contributed by Glu380.

It belongs to the acetokinase family. As to quaternary structure, homodimer. Mg(2+) is required as a cofactor. It depends on Mn(2+) as a cofactor.

The protein localises to the cytoplasm. It carries out the reaction acetate + ATP = acetyl phosphate + ADP. It functions in the pathway metabolic intermediate biosynthesis; acetyl-CoA biosynthesis; acetyl-CoA from acetate: step 1/2. Functionally, catalyzes the formation of acetyl phosphate from acetate and ATP. Can also catalyze the reverse reaction. The chain is Acetate kinase from Deinococcus deserti (strain DSM 17065 / CIP 109153 / LMG 22923 / VCD115).